The chain runs to 327 residues: Taste receptor type 2 member 102 (327 aa).

Residues 1–7 (MEPVIYS) lie on the Extracellular side of the membrane. Residues 8 to 28 (FATLLIHVEFIFGNLSNGFIV) form a helical membrane-spanning segment. Residues 29–46 (LSNFWDWVIKRKLSTIDK) lie on the Cytoplasmic side of the membrane. The chain crosses the membrane as a helical span at residues 47-67 (ILLTLAISRITLIWEIYTWFT). Over 68 to 87 (SVYGPSSFAIGMKLQILYFT) the chain is Extracellular. Residues 88-108 (WILSSHFSLWFATALSIFYLL) form a helical membrane-spanning segment. Residues 109 to 124 (RIANCSWKIFLYLKWR) lie on the Cytoplasmic side of the membrane. Residues 125-145 (LKQVIVGMLLASLVFLPGILT) traverse the membrane as a helical segment. Over 146-179 (QRTLEERPYRYGGNTSEDSMETDFARFTELILFN) the chain is Extracellular. N-linked (GlcNAc...) asparagine glycans are attached at residues asparagine 159 and asparagine 179. Residues 180–200 (LTIFSVIPFSLASISFLLLIF) traverse the membrane as a helical segment. Residues 201–229 (SLWKHLRKMQLSSRGHGDPSTKAHTNALR) lie on the Cytoplasmic side of the membrane. Residues 230-250 (IMVSFLLLYSIYFLSLLLSWI) form a helical membrane-spanning segment. Topologically, residues 251-260 (AQKHHSKLVD) are extracellular. Residues 261 to 281 (IIGIITGLMYPSAHSFILILG) traverse the membrane as a helical segment. Over 282–327 (NSKLMQTSLWILSHLRCRLKGENILNPSGNQVTSCYIFCIANKSVS) the chain is Cytoplasmic.

Belongs to the G-protein coupled receptor T2R family.

The protein resides in the membrane. In terms of biological role, putative taste receptor which may play a role in the perception of bitterness. This chain is Taste receptor type 2 member 102, found in Rattus norvegicus (Rat).